The primary structure comprises 341 residues: 2-dehydro-3-deoxy-L-galactonate 5-dehydrogenase (341 aa).

Residue Cys-37 coordinates Zn(2+). Active-site charge relay system residues include Thr-39 and His-42. Residues His-60, Glu-61, Cys-90, Cys-93, Cys-96, and Cys-104 each coordinate Zn(2+).

This sequence belongs to the zinc-containing alcohol dehydrogenase family. The cofactor is Zn(2+).

It catalyses the reaction 2-dehydro-3-deoxy-L-galactonate + NAD(+) = 3-deoxy-D-glycero-2,5-hexodiulosonate + NADH + H(+). Functionally, involved in the degradation of 3,6-anhydro-L-galactose, which is the major monomeric sugar of red macroalgae. Catalyzes the third step of the pathway, the NAD(+)-dependent oxidation of 2-dehydro-3-deoxy-L-galactonate (L-KDGal) to 3-deoxy-D-glycero-2,5-hexodiulosonate (L-DDGal). This Pseudoalteromonas atlantica (strain T6c / ATCC BAA-1087) protein is 2-dehydro-3-deoxy-L-galactonate 5-dehydrogenase.